The chain runs to 385 residues: Zinc cluster transcription factor CZF1 (385 aa).

Over residues Met-1 to Thr-19 the composition is skewed to polar residues. Disordered stretches follow at residues Met-1–Leu-117, Leu-154–Asp-216, and Ser-233–Thr-308. The segment covering Ser-20 to Ser-38 has biased composition (low complexity). Composition is skewed to polar residues over residues Tyr-52–Thr-67 and Tyr-88–Arg-97. Low complexity-rich tracts occupy residues Leu-102 to Leu-117 and Leu-154 to Leu-169. Positions Asn-170 to Glu-200 are enriched in polar residues. Low complexity-rich tracts occupy residues Gln-201–Gln-214 and Ser-233–Gln-256. The segment covering Lys-265–Arg-275 has biased composition (basic residues). Polar residues predominate over residues Glu-279–Ala-291. The zn(2)-C6 fungal-type DNA-binding region spans Cys-315–Cys-342. The disordered stretch occupies residues Pro-345 to Thr-364. Basic and acidic residues predominate over residues Gly-348–Thr-364.

As to quaternary structure, interacts with EFG1.

The protein localises to the nucleus. Transcriptional regulator of the switch between 2 heritable states, the white and opaque states. These 2 cell types differ in many characteristics, including cell structure, mating competence, and virulence. Each state is heritable for many generations, and switching between states occurs stochastically, at low frequency. Contributes to formation of the opaque state, but is not necessary for heritability of the opaque state. Plays a role in cell adhesion and pseudohyphal growth. Involved in acquisition of drug resistance and acts as a repressor of beta-glucan synthesis, thus negatively regulating cell wall integrity. Plays a role in adherence, invasion and damage to oral epithelial cells. The chain is Zinc cluster transcription factor CZF1 (CZF1) from Candida albicans (strain SC5314 / ATCC MYA-2876) (Yeast).